We begin with the raw amino-acid sequence, 215 residues long: Ras-related protein Rab-42 (215 aa).

GTP-binding residues include glycine 19, glycine 21, lysine 22, threonine 23, and threonine 44. 3 residues coordinate Mg(2+): threonine 23, threonine 44, and aspartate 68. Residues glycine 71, lysine 128, aspartate 130, alanine 157, and lysine 158 each contribute to the GTP site. The disordered stretch occupies residues 196–215 (HRSPNPRSSSRKQDSGTCQC). S-geranylgeranyl cysteine attachment occurs at residues cysteine 213 and cysteine 215.

The protein belongs to the small GTPase superfamily. Rab family. The cofactor is Mg(2+).

The protein localises to the membrane. It carries out the reaction GTP + H2O = GDP + phosphate + H(+). Its activity is regulated as follows. Regulated by guanine nucleotide exchange factors (GEFs) which promote the exchange of bound GDP for free GTP. Regulated by GTPase activating proteins (GAPs) which increase the GTP hydrolysis activity. Inhibited by GDP dissociation inhibitors (GDIs). Functionally, the small GTPases Rab are key regulators of intracellular membrane trafficking, from the formation of transport vesicles to their fusion with membranes. Rabs cycle between an inactive GDP-bound form and an active GTP-bound form that is able to recruit to membranes different sets of downstream effectors directly responsible for vesicle formation, movement, tethering and fusion. The physiological function of RAB42 remains undefined. This is Ras-related protein Rab-42 from Mus musculus (Mouse).